Consider the following 180-residue polypeptide: Acireductone dioxygenase (180 aa).

Fe(2+) contacts are provided by His97, His99, Glu103, and His141. Positions 97, 99, 103, and 141 each coordinate Ni(2+).

Belongs to the acireductone dioxygenase (ARD) family. Monomer. Fe(2+) is required as a cofactor. It depends on Ni(2+) as a cofactor.

It catalyses the reaction 1,2-dihydroxy-5-(methylsulfanyl)pent-1-en-3-one + O2 = 3-(methylsulfanyl)propanoate + CO + formate + 2 H(+). It carries out the reaction 1,2-dihydroxy-5-(methylsulfanyl)pent-1-en-3-one + O2 = 4-methylsulfanyl-2-oxobutanoate + formate + 2 H(+). It participates in amino-acid biosynthesis; L-methionine biosynthesis via salvage pathway; L-methionine from S-methyl-5-thio-alpha-D-ribose 1-phosphate: step 5/6. In terms of biological role, catalyzes 2 different reactions between oxygen and the acireductone 1,2-dihydroxy-3-keto-5-methylthiopentene (DHK-MTPene) depending upon the metal bound in the active site. Fe-containing acireductone dioxygenase (Fe-ARD) produces formate and 2-keto-4-methylthiobutyrate (KMTB), the alpha-ketoacid precursor of methionine in the methionine recycle pathway. Ni-containing acireductone dioxygenase (Ni-ARD) produces methylthiopropionate, carbon monoxide and formate, and does not lie on the methionine recycle pathway. The chain is Acireductone dioxygenase from Enterobacter sp. (strain 638).